A 477-amino-acid polypeptide reads, in one-letter code: Protoporphyrinogen oxidase (477 aa).

Residues 9 to 14, Trp-42, 57 to 60, Val-257, Ala-449, and 454 to 456 each bind FAD; these read GGGISG, GPRG, and VAV.

It belongs to the protoporphyrinogen/coproporphyrinogen oxidase family. Protoporphyrinogen oxidase subfamily. Monomer. Homodimer. It depends on FAD as a cofactor.

The protein localises to the mitochondrion inner membrane. The catalysed reaction is protoporphyrinogen IX + 3 O2 = protoporphyrin IX + 3 H2O2. The protein operates within porphyrin-containing compound metabolism; protoporphyrin-IX biosynthesis; protoporphyrin-IX from protoporphyrinogen-IX: step 1/1. Catalyzes the 6-electron oxidation of protoporphyrinogen-IX to form protoporphyrin-IX. The protein is Protoporphyrinogen oxidase (PPOX) of Macaca fascicularis (Crab-eating macaque).